We begin with the raw amino-acid sequence, 254 residues long: 3-deoxy-manno-octulosonate cytidylyltransferase (254 aa).

The protein belongs to the KdsB family.

It localises to the cytoplasm. The enzyme catalyses 3-deoxy-alpha-D-manno-oct-2-ulosonate + CTP = CMP-3-deoxy-beta-D-manno-octulosonate + diphosphate. The protein operates within nucleotide-sugar biosynthesis; CMP-3-deoxy-D-manno-octulosonate biosynthesis; CMP-3-deoxy-D-manno-octulosonate from 3-deoxy-D-manno-octulosonate and CTP: step 1/1. It participates in bacterial outer membrane biogenesis; lipopolysaccharide biosynthesis. Functionally, activates KDO (a required 8-carbon sugar) for incorporation into bacterial lipopolysaccharide in Gram-negative bacteria. This Pseudomonas putida (strain GB-1) protein is 3-deoxy-manno-octulosonate cytidylyltransferase.